The following is a 469-amino-acid chain: Ribulose bisphosphate carboxylase large chain (469 aa).

At K5 the chain carries N6,N6,N6-trimethyllysine. Residues N114 and T164 each coordinate substrate. The Proton acceptor role is filled by K166. K168 lines the substrate pocket. Positions 192, 194, and 195 each coordinate Mg(2+). K192 carries the N6-carboxylysine modification. The active-site Proton acceptor is H285. 3 residues coordinate substrate: R286, H318, and S370.

This sequence belongs to the RuBisCO large chain family. Type I subfamily. In terms of assembly, heterohexadecamer of 8 large chains and 8 small chains; disulfide-linked. The disulfide link is formed within the large subunit homodimers. Mg(2+) is required as a cofactor. In terms of processing, the disulfide bond which can form in the large chain dimeric partners within the hexadecamer appears to be associated with oxidative stress and protein turnover.

It localises to the plastid. Its subcellular location is the chloroplast. It catalyses the reaction 2 (2R)-3-phosphoglycerate + 2 H(+) = D-ribulose 1,5-bisphosphate + CO2 + H2O. It carries out the reaction D-ribulose 1,5-bisphosphate + O2 = 2-phosphoglycolate + (2R)-3-phosphoglycerate + 2 H(+). In terms of biological role, ruBisCO catalyzes two reactions: the carboxylation of D-ribulose 1,5-bisphosphate, the primary event in carbon dioxide fixation, as well as the oxidative fragmentation of the pentose substrate in the photorespiration process. Both reactions occur simultaneously and in competition at the same active site. In Cephalanthus occidentalis (Common buttonbush), this protein is Ribulose bisphosphate carboxylase large chain.